Consider the following 274-residue polypeptide: Dehydration-responsive element-binding protein 2A (274 aa).

2 stretches are compositionally biased toward basic and acidic residues: residues 1-10 (MERGEGRRGD) and 35-50 (KWWK…ENSS). Residues 1-75 (MERGEGRRGD…KGGPENSNCA (75 aa)) form a disordered region. Residues 75–132 (AYRGVRQRTWGKWVAEIREPNRGRRLWLGSFPTALEAAHAYDEAARAMYGPTARVNFA) constitute a DNA-binding region (AP2/ERF).

This sequence belongs to the AP2/ERF transcription factor family. ERF subfamily.

The protein localises to the nucleus. Its function is as follows. Transcriptional activator that binds specifically to the DNA sequence 5'-[AG]CCGAC-3'. Binding to the C-repeat/DRE element mediates high salinity- and dehydration-inducible transcription. The polypeptide is Dehydration-responsive element-binding protein 2A (DREB2A) (Oryza sativa subsp. indica (Rice)).